The chain runs to 482 residues: tRNA sulfurtransferase (482 aa).

The THUMP domain occupies Leu-61 to Arg-165. ATP contacts are provided by residues Leu-183–Ile-184, Lys-265, Gly-287, and Gln-296. An intrachain disulfide couples Cys-344 to Cys-456. Positions Phe-404 to Pro-482 constitute a Rhodanese domain. Cys-456 acts as the Cysteine persulfide intermediate in catalysis.

It belongs to the ThiI family.

The protein resides in the cytoplasm. It carries out the reaction [ThiI sulfur-carrier protein]-S-sulfanyl-L-cysteine + a uridine in tRNA + 2 reduced [2Fe-2S]-[ferredoxin] + ATP + H(+) = [ThiI sulfur-carrier protein]-L-cysteine + a 4-thiouridine in tRNA + 2 oxidized [2Fe-2S]-[ferredoxin] + AMP + diphosphate. The catalysed reaction is [ThiS sulfur-carrier protein]-C-terminal Gly-Gly-AMP + S-sulfanyl-L-cysteinyl-[cysteine desulfurase] + AH2 = [ThiS sulfur-carrier protein]-C-terminal-Gly-aminoethanethioate + L-cysteinyl-[cysteine desulfurase] + A + AMP + 2 H(+). The protein operates within cofactor biosynthesis; thiamine diphosphate biosynthesis. Its function is as follows. Catalyzes the ATP-dependent transfer of a sulfur to tRNA to produce 4-thiouridine in position 8 of tRNAs, which functions as a near-UV photosensor. Also catalyzes the transfer of sulfur to the sulfur carrier protein ThiS, forming ThiS-thiocarboxylate. This is a step in the synthesis of thiazole, in the thiamine biosynthesis pathway. The sulfur is donated as persulfide by IscS. The protein is tRNA sulfurtransferase of Escherichia coli O9:H4 (strain HS).